The sequence spans 340 residues: MTIRVGVNGFGRIGRNFYRALATQKAEGKNTDIEIVAVNDLTDNATLAHLLKFDSILGRLPQDVSLEGDDTIVIGDTKIKALEVKEGPAALPWGDLGVDVVVESTGIFTNAAKAKGHLDAGAKKVIISAPATDEDITIVLGVNDDKYDGSQNIISNASCTTNCLGPLAKVLNDEFGIVKGLMTTIHAYTQDQNLQDGPHKDLRRARAAALNIVPTSTGAAKAIGLVLPELKGKLDGYALRVPIPTGSVTDLTAELAKSASVEDINAAMKAAAEGPLKGILKYYDAPIVSSDIVTDPHSSLYDAGLTKVIDNQAKVVSWYDNEWGYSNRLADLVALVGKSL.

Residues 12 to 13 (RI), aspartate 40, lysine 85, and serine 128 contribute to the NAD(+) site. Residues 158-160 (SCT), threonine 189, arginine 204, 217-218 (TG), and arginine 240 each bind D-glyceraldehyde 3-phosphate. Cysteine 159 serves as the catalytic Nucleophile. Lysine 257 participates in a covalent cross-link: Isoglutamyl lysine isopeptide (Lys-Gln) (interchain with Q-Cter in protein Pup). Residue asparagine 321 participates in NAD(+) binding.

The protein belongs to the glyceraldehyde-3-phosphate dehydrogenase family. Homotetramer.

Its subcellular location is the cytoplasm. The enzyme catalyses D-glyceraldehyde 3-phosphate + phosphate + NAD(+) = (2R)-3-phospho-glyceroyl phosphate + NADH + H(+). Its pathway is carbohydrate degradation; glycolysis; pyruvate from D-glyceraldehyde 3-phosphate: step 1/5. In terms of biological role, catalyzes the oxidative phosphorylation of glyceraldehyde 3-phosphate (G3P) to 1,3-bisphosphoglycerate (BPG) using the cofactor NAD. The first reaction step involves the formation of a hemiacetal intermediate between G3P and a cysteine residue, and this hemiacetal intermediate is then oxidized to a thioester, with concomitant reduction of NAD to NADH. The reduced NADH is then exchanged with the second NAD, and the thioester is attacked by a nucleophilic inorganic phosphate to produce BPG. The chain is Glyceraldehyde-3-phosphate dehydrogenase (gapA) from Mycolicibacterium smegmatis (strain ATCC 700084 / mc(2)155) (Mycobacterium smegmatis).